The sequence spans 591 residues: L-fucose isomerase (591 aa).

Residues Glu337 and Asp361 each act as proton acceptor in the active site. Positions 337, 361, and 528 each coordinate Mn(2+).

It belongs to the L-fucose isomerase family. In terms of assembly, homohexamer. It depends on Mn(2+) as a cofactor.

It localises to the cytoplasm. It catalyses the reaction L-fucose = L-fuculose. It participates in carbohydrate degradation; L-fucose degradation; L-lactaldehyde and glycerone phosphate from L-fucose: step 1/3. Converts the aldose L-fucose into the corresponding ketose L-fuculose. This is L-fucose isomerase from Escherichia coli (strain SMS-3-5 / SECEC).